Reading from the N-terminus, the 209-residue chain is Neurotrophin-4 (209 aa).

Residues 1–21 (MLPRHSCSLLLFLFLLPSVPM) form the signal peptide. The propeptide occupies 22–79 (EPHPPSSTLPPFLAPEWDLLSPRVALSRGAPAGPPLLFLLEAGAYGEPAGAPANRSRR). An N-linked (GlcNAc...) asparagine glycan is attached at asparagine 75. Cystine bridges form between cysteine 96-cysteine 169, cysteine 140-cysteine 198, and cysteine 157-cysteine 200.

Belongs to the NGF-beta family.

The protein resides in the secreted. Target-derived survival factor for peripheral sensory sympathetic neurons. May promote ameloblast differentiation and subsequent reduction in proliferation of ameloblasts. This is Neurotrophin-4 (Ntf4) from Mus musculus (Mouse).